Reading from the N-terminus, the 389-residue chain is Acetylornithine deacetylase (389 aa).

His85 contributes to the Zn(2+) binding site. The active site involves Asp87. Residue Asp117 participates in Zn(2+) binding. The active site involves Glu149. Zn(2+) contacts are provided by Glu150, Glu174, and His360.

This sequence belongs to the peptidase M20A family. ArgE subfamily. Homodimer. Zn(2+) is required as a cofactor. It depends on Co(2+) as a cofactor. The cofactor is glutathione.

Its subcellular location is the cytoplasm. It carries out the reaction N(2)-acetyl-L-ornithine + H2O = L-ornithine + acetate. It functions in the pathway amino-acid biosynthesis; L-arginine biosynthesis; L-ornithine from N(2)-acetyl-L-ornithine (linear): step 1/1. Its function is as follows. Catalyzes the hydrolysis of the amide bond of N(2)-acetylated L-amino acids. Cleaves the acetyl group from N-acetyl-L-ornithine to form L-ornithine, an intermediate in L-arginine biosynthesis pathway, and a branchpoint in the synthesis of polyamines. This chain is Acetylornithine deacetylase, found in Yersinia pseudotuberculosis serotype O:1b (strain IP 31758).